Reading from the N-terminus, the 160-residue chain is Putative pre-16S rRNA nuclease (160 aa).

The protein belongs to the YqgF nuclease family.

Its subcellular location is the cytoplasm. Its function is as follows. Could be a nuclease involved in processing of the 5'-end of pre-16S rRNA. This chain is Putative pre-16S rRNA nuclease, found in Cereibacter sphaeroides (strain ATCC 17029 / ATH 2.4.9) (Rhodobacter sphaeroides).